Consider the following 1092-residue polypeptide: Isoleucine--tRNA ligase (1092 aa).

Residues 53-63 (PFANGLPHYGH) carry the 'HIGH' region motif. The short motif at 613-617 (KLSKR) is the 'KMSKS' region element. An ATP-binding site is contributed by lysine 616.

The protein belongs to the class-I aminoacyl-tRNA synthetase family. IleS type 2 subfamily. Monomer. It depends on Zn(2+) as a cofactor.

It is found in the cytoplasm. The enzyme catalyses tRNA(Ile) + L-isoleucine + ATP = L-isoleucyl-tRNA(Ile) + AMP + diphosphate. Catalyzes the attachment of isoleucine to tRNA(Ile). As IleRS can inadvertently accommodate and process structurally similar amino acids such as valine, to avoid such errors it has two additional distinct tRNA(Ile)-dependent editing activities. One activity is designated as 'pretransfer' editing and involves the hydrolysis of activated Val-AMP. The other activity is designated 'posttransfer' editing and involves deacylation of mischarged Val-tRNA(Ile). The chain is Isoleucine--tRNA ligase from Rickettsia conorii (strain ATCC VR-613 / Malish 7).